A 691-amino-acid chain; its full sequence is Competence protein ComA (691 aa).

Transmembrane regions (helical) follow at residues 183-203 (HLVS…AWLA), 220-240 (WVLA…GFSV), 280-300 (LAVL…LIWA), 322-342 (VLSL…SPLV), 347-367 (IPWF…VPFA), and 396-416 (VAAA…LLLL).

This sequence to B.subtilis ComEC, H.influenzae REC2, and E.coli YcaI.

The protein resides in the cell inner membrane. Essential for natural transformation. Could be a transporter involved in DNA uptake. The polypeptide is Competence protein ComA (comA) (Neisseria gonorrhoeae).